The sequence spans 524 residues: Ribonuclease Y (524 aa).

A helical transmembrane segment spans residues 3-23; that stretch reads IVINLLLLVLAALVAFVAGFF. Residues 214–280 enclose the KH domain; sequence ALSVVHIQSD…KLTLKKLLAD (67 aa). The 93-residue stretch at 340–432 folds into the HD domain; that stretch reads LLQHSREVAM…VDAANTISLS (93 aa).

It belongs to the RNase Y family.

The protein resides in the cell membrane. Endoribonuclease that initiates mRNA decay. The polypeptide is Ribonuclease Y (Chlorobium chlorochromatii (strain CaD3)).